The following is a 63-amino-acid chain: UPF0370 protein PC1_1167 (63 aa).

Residues 3–23 (WLADYWWIILIILIGMLINGI) traverse the membrane as a helical segment. Residues 37-63 (NKPKLPPHRDNNDKWDDEDDDWPKKKP) form a disordered region.

Belongs to the UPF0370 family.

It localises to the cell membrane. This chain is UPF0370 protein PC1_1167, found in Pectobacterium carotovorum subsp. carotovorum (strain PC1).